A 222-amino-acid chain; its full sequence is MLPHGLIVSCQALPDEPLHSSFIMSKMALAAYEGGAVGIRANTKEDILAIKETVDLPVIGIVKRDYDHSDVFITATSKEVDELIESQCEVIALDATLQQRPKETLDELVSYIRTHAPNVEIMADIATVEEAKNAARLGFDYIGTTLHGYTSYTQGQLLYQNDFQFLKDVLQSVDAKVIAEGNVITPDMYKRVMDLGVHCSVVGGAITRPKEITKRFVQIMED.

It belongs to the NanE family.

It carries out the reaction an N-acyl-D-glucosamine 6-phosphate = an N-acyl-D-mannosamine 6-phosphate. The protein operates within amino-sugar metabolism; N-acetylneuraminate degradation; D-fructose 6-phosphate from N-acetylneuraminate: step 3/5. In terms of biological role, converts N-acetylmannosamine-6-phosphate (ManNAc-6-P) to N-acetylglucosamine-6-phosphate (GlcNAc-6-P). The polypeptide is Putative N-acetylmannosamine-6-phosphate 2-epimerase (Staphylococcus aureus (strain USA300)).